The sequence spans 145 residues: tRNA-specific adenosine deaminase (145 aa).

Residues 1–116 (MREALKQAEI…SNLRYFNSKA (116 aa)) form the CMP/dCMP-type deaminase domain. His-48 lines the Zn(2+) pocket. Glu-50 serves as the catalytic Proton donor. 2 residues coordinate Zn(2+): Cys-78 and Cys-81.

It belongs to the cytidine and deoxycytidylate deaminase family. In terms of assembly, homodimer. It depends on Zn(2+) as a cofactor.

It catalyses the reaction adenosine(34) in tRNA + H2O + H(+) = inosine(34) in tRNA + NH4(+). Catalyzes the deamination of adenosine to inosine at the wobble position 34 of tRNA(Arg2). The chain is tRNA-specific adenosine deaminase from Rickettsia bellii (strain RML369-C).